The primary structure comprises 130 residues: Snaclec B8 (130 aa).

Disulfide bonds link cysteine 2/cysteine 13, cysteine 30/cysteine 124, and cysteine 99/cysteine 116. A C-type lectin domain is found at histidine 9–methionine 125.

The protein belongs to the snaclec family. In terms of assembly, heterodimer; disulfide-linked. As to expression, expressed by the venom gland.

It is found in the secreted. Functionally, interferes with one step of hemostasis (modulation of platelet aggregation, or coagulation cascade, for example). This Macrovipera lebetinus (Levantine viper) protein is Snaclec B8.